The sequence spans 429 residues: 3-phosphoshikimate 1-carboxyvinyltransferase (429 aa).

Residues Lys21, Ser22, and Arg26 each coordinate 3-phosphoshikimate. A phosphoenolpyruvate-binding site is contributed by Lys21. Phosphoenolpyruvate-binding residues include Gly94 and Arg122. Residues Ser167, Gln169, Asp315, and Lys342 each contribute to the 3-phosphoshikimate site. Gln169 provides a ligand contact to phosphoenolpyruvate. Asp315 (proton acceptor) is an active-site residue. 2 residues coordinate phosphoenolpyruvate: Arg346 and Arg388.

The protein belongs to the EPSP synthase family. In terms of assembly, monomer.

Its subcellular location is the cytoplasm. The catalysed reaction is 3-phosphoshikimate + phosphoenolpyruvate = 5-O-(1-carboxyvinyl)-3-phosphoshikimate + phosphate. It functions in the pathway metabolic intermediate biosynthesis; chorismate biosynthesis; chorismate from D-erythrose 4-phosphate and phosphoenolpyruvate: step 6/7. Functionally, catalyzes the transfer of the enolpyruvyl moiety of phosphoenolpyruvate (PEP) to the 5-hydroxyl of shikimate-3-phosphate (S3P) to produce enolpyruvyl shikimate-3-phosphate and inorganic phosphate. The chain is 3-phosphoshikimate 1-carboxyvinyltransferase from Desulforudis audaxviator (strain MP104C).